The following is a 736-amino-acid chain: Elongation factor 2 (736 aa).

The 245-residue stretch at 18–262 (TRVRNIGIIA…AVIKFVPNPV (245 aa)) folds into the tr-type G domain. Residues 27 to 34 (AHVDHGKT), 93 to 97 (DTPGH), and 147 to 150 (NKVD) contribute to the GTP site. Position 603 is a diphthamide (His603).

Belongs to the TRAFAC class translation factor GTPase superfamily. Classic translation factor GTPase family. EF-G/EF-2 subfamily.

Its subcellular location is the cytoplasm. In terms of biological role, catalyzes the GTP-dependent ribosomal translocation step during translation elongation. During this step, the ribosome changes from the pre-translocational (PRE) to the post-translocational (POST) state as the newly formed A-site-bound peptidyl-tRNA and P-site-bound deacylated tRNA move to the P and E sites, respectively. Catalyzes the coordinated movement of the two tRNA molecules, the mRNA and conformational changes in the ribosome. This chain is Elongation factor 2, found in Metallosphaera sedula (strain ATCC 51363 / DSM 5348 / JCM 9185 / NBRC 15509 / TH2).